The chain runs to 163 residues: NADH-quinone oxidoreductase subunit I (163 aa).

4Fe-4S ferredoxin-type domains lie at 53 to 83 and 94 to 123; these read LRRYPNGEERCIACKLCEAICPAQAITIEAG and VRYDIDMVKCIYCGFCQEACPVDAIVEGPN. Residues Cys-63, Cys-66, Cys-69, Cys-73, Cys-103, Cys-106, Cys-109, and Cys-113 each contribute to the [4Fe-4S] cluster site.

It belongs to the complex I 23 kDa subunit family. NDH-1 is composed of 14 different subunits. Subunits NuoA, H, J, K, L, M, N constitute the membrane sector of the complex. Requires [4Fe-4S] cluster as cofactor.

It is found in the cell inner membrane. The catalysed reaction is a quinone + NADH + 5 H(+)(in) = a quinol + NAD(+) + 4 H(+)(out). Its function is as follows. NDH-1 shuttles electrons from NADH, via FMN and iron-sulfur (Fe-S) centers, to quinones in the respiratory chain. The immediate electron acceptor for the enzyme in this species is believed to be ubiquinone. Couples the redox reaction to proton translocation (for every two electrons transferred, four hydrogen ions are translocated across the cytoplasmic membrane), and thus conserves the redox energy in a proton gradient. In Rhizobium johnstonii (strain DSM 114642 / LMG 32736 / 3841) (Rhizobium leguminosarum bv. viciae), this protein is NADH-quinone oxidoreductase subunit I.